Reading from the N-terminus, the 344-residue chain is Follistatin (344 aa).

Positions 1 to 29 (MVRPRHQPGGLCLLLLLLCQFMEDRSAQA) are cleaved as a signal peptide. The 74-residue stretch at 30–103 (GNCWLRQAKN…TCDNVDCGPG (74 aa)) folds into the TB domain. Cystine bridges form between Cys32/Cys55, Cys42/Cys88, Cys56/Cys91, Cys95/Cys106, Cys100/Cys116, Cys118/Cys150, Cys122/Cys143, Cys132/Cys164, Cys168/Cys179, Cys173/Cys189, Cys192/Cys225, Cys196/Cys218, Cys207/Cys239, Cys245/Cys256, Cys250/Cys267, Cys270/Cys302, Cys274/Cys295, and Cys284/Cys316. The 24-residue stretch at 94–117 (TCDNVDCGPGKKCRMNKKNKPRCV) folds into the Follistatin-like 1 domain. A Kazal-like 1 domain is found at 112–166 (NKPRCVCAPDCSNITWKGPVCGLDGKTYRNECALLKARCKEQPELEVQYQGKCKK). The N-linked (GlcNAc...) asparagine glycan is linked to Asn124. Residues 167-190 (TCRDVNCPGSSTCVVDQTNNAYCV) form the Follistatin-like 2 domain. A Kazal-like 2 domain is found at 186–241 (NAYCVTCNRICPEPTSSEQYLCGNDGVTYSSACHLRKATCLLGRSIGLAYEGKCIK). Positions 244–268 (SCEDIQCTGGKKCLWDFKVGRGRCS) constitute a Follistatin-like 3 domain. The 55-residue stretch at 264–318 (RGRCSLCDELCPDSKSEEPVCASDNATYASECAMKEAACSSGVLLEVKHSGSCNS) folds into the Kazal-like 3 domain. N-linked (GlcNAc...) asparagine glycosylation is present at Asn288. Positions 314–344 (GSCNSISEDTEEEEEDEDQDYSFPISSILEW) are disordered. Over residues 321–333 (EDTEEEEEDEDQD) the composition is skewed to acidic residues.

In terms of assembly, interacts with GDF11. Interacts with activin A/INHBA. Interacts with myostatin/MSTN.

The protein localises to the secreted. The protein resides in the nucleus. Its subcellular location is the nucleolus. Its function is as follows. Multifunctional regulatory protein whose primary function is to antagonize members of the transforming growth factor beta (TGF-beta) superfamily including activin, myostatin, GDF11 or bone morphogenetic proteins (BMPs). Mechanistically, binds to these ligands in the extracellular space, blocking their type II receptor-binding site to inhibit downstream signaling. Plays an essential role in muscle fiber formation and growth both by preventing the repressive effects of myostatin and through SMAD3/AKT/mTOR signaling independently of myostatin. Also promotes neural differentiation by antagonizing the action BMP4. Acts as a specific inhibitor of the biosynthesis and secretion of pituitary follicle stimulating hormone (FSH) by sequestering activin A/INHBA. On the other hand, translocates into the nucleus where it down-regulates rRNA synthesis and ribosome biogenesis to maintain cellular energy homeostasis by binding to rDNA. The polypeptide is Follistatin (Equus caballus (Horse)).